The following is a 436-amino-acid chain: FAD-dependent monooxygenase pigN (436 aa).

Residues Glu-40, Gly-53, and Arg-118 each coordinate FAD. The active site involves Arg-200. FAD-binding residues include Asp-316 and Ala-329.

It belongs to the paxM FAD-dependent monooxygenase family. The cofactor is FAD.

It functions in the pathway secondary metabolite biosynthesis. FAD-dependent monooxygenase; part of the gene cluster that mediates the biosynthesis of azaphilone pigments (MonAzPs), a complex mixture of compounds with a common azaphilone skeleton very widely used as food colorants. Within the pathway, pigN hydroxylates the benzaldehyde M7PKS-1 intermediate at C-4 to form the pyran ring. The first step of the pathway is performed by the nrPKS pigA that forms the hexaketide precursor from successive condensations of five malonyl-CoA units, with a simple acetyl-CoA starter unit. The role of esterase pigG is not clear, but it may play at most a supplementary role in the formation of the benzaldehyde produced by the pigA nrPKS. This very reactive benzaldehyde is intercepted by the pigC ketoreductase that to provide the first stable enzyme-free MonAzPs intermediate, 6-(4-hydroxy-2-oxopentyl)-3-methyl-2,4-dioxocyclohexane carbaldehyde, also known as M7PKS-1. The FAD-dependent monooxygenase pigN hydroxylates M7PKS-1 at C-4, which triggers the formation of the pyran ring. PigJ, pigK and pigD are involved in the acetylation of the pyran ring. PigJ and pigK form the two subunits of a dedicated fungal FAS that produces the side chain fatty acyl moiety of MonAzPs and pigD transfers the fatty acyl chain to the C-4 alcohol. PigM and pigO are involved in the elimination of the omega-1 alcohol. PigM acts as an O-acetyltransferase that synthesizes the putative O-11 acetyl intermediate whereas pigO eliminates acetic acid to yield an intermediate with a C10(11) double bond. The dehydration of the C-11 alcohol followed by the reduction of the C6(7) double bond by the NAD(P)H-dependent oxidoreductase pigE increases the electrophilicity of the C-5 ketone of the resulting acyl benzopyran. This in turn sets up the C-5 ketone for an intramolecular Knoevenagel aldol condensation with the C-20 enol of the side chain. This condensation affords the characteristic linear tricyclic carbon skeletons of the yellow pigments that serve as the common precursors for the classical yellow pigments monascin and ankaflavin, orange pigments rubopunctatin and monascorubrin, and red pigments ribropunctamine and monascorubramine. The FAD-dependent oxidoreductase pigF is especially invoved in the biosynthesis of orange and red pigments via desaturation of C6(7). This Monascus ruber (Mold) protein is FAD-dependent monooxygenase pigN.